The primary structure comprises 725 residues: MSPSPTRLAVRSVDPQKTPNLTSKAPARPSRKSEWVETTAHLRRKPCHSRHNSPAWEISGPPWSSQDHLGPHQASKPSTQRFWSPGPPLARAQAWEPIPPHQKKLCHLSSTSLPRETIASLPCKSQTLRQEVRKHWSPELFPRSPGTSDLKTLASEKTTALPLKNLCHFRSVEKNSGAIAHPQDSRESSHKSALAASSRQSRSRVRSASLPPRTRLPSGSEAPLTDHSARLSDLLLTSHATAPRWRSPDPCLRLAEPPLGSTTTPLSIWTAPQSQVMARPSKSREPQIRASAQRDPQLSEKQPRWKEALPPPLRWKEKSPLRREGTDLPPSLKQWMPSQPLLPKPSLPDLMLELLRIPRCSQIARAMPEKTGQPQERLQISSRILKNSKKPQLSAPILTEGQPQSPQPLLPSPSLKAAEIQPPSQPPRQSLPPRPSLPPGQPLSPRWSPQPRQSLPPWRSLPPGQPLSPPRSPLPGQSPLLEPIRPLEQSLAPQQCQPLLGQLPLGQPMQVHWSGEPGHSQLLPPLGHPFLPAQQLPPGQPLLPAQSLLAGQPLPPPAGPILDPPAPRSRLLTRLLRGLLRGRLPGLTSTSGAEAAAGTRHRLASARSSPPVMSRKKGPPAASSGFCGETAALACPGATRSGATQSATSSPEPSEAASVYPSVPDHDPSAPGRPRILWRRGANRCAKKPLRCESRSAQIRNAASSSTSNWRRRRWTTCVHTACCF.

7 disordered regions span residues 1–93 (MSPS…ARAQ), 177–226 (GAIA…PLTD), 256–340 (EPPL…PSQP), 396–481 (PILT…SPLL), 508–528 (PMQV…PLGH), 584–624 (LPGL…AASS), and 638–675 (ATRS…GRPR). Residues 41–51 (HLRRKPCHSRH) show a composition bias toward basic residues. Polar residues predominate over residues 260–276 (GSTTTPLSIWTAPQSQV). 2 stretches are compositionally biased toward basic and acidic residues: residues 297–307 (QLSEKQPRWKE) and 314–326 (RWKE…REGT). Composition is skewed to pro residues over residues 423–442 (PSQP…PGQP) and 459–473 (RSLP…PRSP). Low complexity-rich tracts occupy residues 584-598 (LPGL…AAAG) and 643-658 (ATQS…EAAS).

This sequence belongs to the ALEX family. As to quaternary structure, interacts with the N-terminal region of the XLas isoforms of guanine nucleotide-binding protein G(s) subunit alpha.

It is found in the cell membrane. The protein localises to the cell projection. The protein resides in the ruffle. Its function is as follows. May inhibit the adenylyl cyclase-stimulating activity of guanine nucleotide-binding protein G(s) subunit alpha which is produced from the same locus in a different open reading frame. The sequence is that of Protein ALEX from Mus musculus (Mouse).